We begin with the raw amino-acid sequence, 180 residues long: Pro-glucagon (180 aa).

An N-terminal signal peptide occupies residues 1-20 (MKTVYIVAGLFVMLVQGSWQ). The interval 23 to 59 (PQDTEENARSFPASQTEPLEDPDQINEDKRHSQGTFT) is disordered. Ser-54 carries the phosphoserine modification. A propeptide spanning residues 84–89 (NRNNIA) is cleaved from the precursor. Phosphoserine occurs at positions 105 and 108. Arg-127 bears the Arginine amide mark. The propeptide occupies 131-145 (DFPEEVAIAEELGRR). Phosphoserine is present on residues Ser-150 and Ser-152.

The protein belongs to the glucagon family. Post-translationally, proglucagon is post-translationally processed in a tissue-specific manner in pancreatic A cells and intestinal L cells. In pancreatic A cells, the major bioactive hormone is glucagon cleaved by PCSK2/PC2. In the intestinal L cells PCSK1/PC1 liberates GLP-1, GLP-2, glicentin and oxyntomodulin. GLP-1 is further N-terminally truncated by post-translational processing in the intestinal L cells resulting in GLP-1(7-37) GLP-1-(7-36)amide. The C-terminal amidation is neither important for the metabolism of GLP-1 nor for its effects on the endocrine pancreas. Glucagon is secreted in the A cells of the islets of Langerhans. GLP-1, GLP-2, oxyntomodulin and glicentin are secreted from enteroendocrine cells throughout the gastrointestinal tract.

It is found in the secreted. In terms of biological role, plays a key role in glucose metabolism and homeostasis. Regulates blood glucose by increasing gluconeogenesis and decreasing glycolysis. A counterregulatory hormone of insulin, raises plasma glucose levels in response to insulin-induced hypoglycemia. Plays an important role in initiating and maintaining hyperglycemic conditions in diabetes. Potent stimulator of glucose-dependent insulin release. Also stimulates insulin release in response to IL6. Plays important roles on gastric motility and the suppression of plasma glucagon levels. May be involved in the suppression of satiety and stimulation of glucose disposal in peripheral tissues, independent of the actions of insulin. Has growth-promoting activities on intestinal epithelium. May also regulate the hypothalamic pituitary axis (HPA) via effects on LH, TSH, CRH, oxytocin, and vasopressin secretion. Increases islet mass through stimulation of islet neogenesis and pancreatic beta cell proliferation. Inhibits beta cell apoptosis. Its function is as follows. Stimulates intestinal growth and up-regulates villus height in the small intestine, concomitant with increased crypt cell proliferation and decreased enterocyte apoptosis. The gastrointestinal tract, from the stomach to the colon is the principal target for GLP-2 action. Plays a key role in nutrient homeostasis, enhancing nutrient assimilation through enhanced gastrointestinal function, as well as increasing nutrient disposal. Stimulates intestinal glucose transport and decreases mucosal permeability. Functionally, may modulate gastric acid secretion and the gastro-pyloro-duodenal activity. May play an important role in intestinal mucosal growth in the early period of life. In terms of biological role, oxyntomodulin significantly reduces food intake. The protein is Pro-glucagon (Gcg) of Rattus norvegicus (Rat).